The primary structure comprises 410 residues: Diguanylate cyclase DgcM (410 aa).

2 PAS domains span residues 3 to 70 (THNF…NQHD) and 129 to 198 (GFYA…HLPG). A PAC domain is found at 199 to 251 (GHKPLNFIHKLADGSTRHVQTYAGPIEIYGDKLMLCIVHDITEQKRLEEQLEH). Positions 283 to 410 (QDYSLLLIDT…NDGRNRVLAA (128 aa)) constitute a GGDEF domain. Asp291 provides a ligand contact to Mg(2+). Substrate is bound by residues Asn299, His304, and Asp308. Glu334 contributes to the Mg(2+) binding site. Residue Glu334 is the Proton acceptor of the active site.

The cofactor is Mg(2+).

It carries out the reaction 2 GTP = 3',3'-c-di-GMP + 2 diphosphate. Its pathway is purine metabolism; 3',5'-cyclic di-GMP biosynthesis. Functionally, part of a signaling cascade that regulates curli biosynthesis. The cascade is composed of two cyclic-di-GMP (c-di-GMP) control modules, in which c-di-GMP controlled by the DgcE/PdeH pair (module I) regulates the activity of the DgcM/PdeR pair (module II), which in turn regulates activity of the transcription factor MlrA and expression of the master biofilm regulator csgD. This chain is Diguanylate cyclase DgcM, found in Escherichia coli O157:H7.